A 368-amino-acid chain; its full sequence is Anti-sigma-X factor RsiX (368 aa).

A compositionally biased stretch (polar residues) spans 73–87 (QPQQKEASQENAVTK). A disordered region spans residues 73–101 (QPQQKEASQENAVTKTETEDSPKAASSLD).

The protein localises to the cell membrane. In terms of biological role, the anti-sigma factor for extracytoplasmic function (ECF) sigma factor SigX, inhibits SigX activity and stabilizes it. The chain is Anti-sigma-X factor RsiX (rsiX) from Bacillus subtilis (strain 168).